The primary structure comprises 144 residues: 3-dehydroquinate dehydratase (144 aa).

The active-site Proton acceptor is Tyr-22. Substrate-binding residues include Asn-71, His-77, and Asp-84. His-97 serves as the catalytic Proton donor. Residues 98-99 (IS) and Arg-108 each bind substrate.

The protein belongs to the type-II 3-dehydroquinase family. In terms of assembly, homododecamer.

It carries out the reaction 3-dehydroquinate = 3-dehydroshikimate + H2O. Its pathway is metabolic intermediate biosynthesis; chorismate biosynthesis; chorismate from D-erythrose 4-phosphate and phosphoenolpyruvate: step 3/7. Functionally, catalyzes a trans-dehydration via an enolate intermediate. The protein is 3-dehydroquinate dehydratase of Thermotoga petrophila (strain ATCC BAA-488 / DSM 13995 / JCM 10881 / RKU-1).